The following is a 203-amino-acid chain: Urease accessory protein UreG (203 aa).

Residue 14–21 (GPVGSGKT) coordinates GTP.

Belongs to the SIMIBI class G3E GTPase family. UreG subfamily. In terms of assembly, homodimer. UreD, UreF and UreG form a complex that acts as a GTP-hydrolysis-dependent molecular chaperone, activating the urease apoprotein by helping to assemble the nickel containing metallocenter of UreC. The UreE protein probably delivers the nickel.

The protein resides in the cytoplasm. Facilitates the functional incorporation of the urease nickel metallocenter. This process requires GTP hydrolysis, probably effectuated by UreG. This chain is Urease accessory protein UreG, found in Allorhizobium ampelinum (strain ATCC BAA-846 / DSM 112012 / S4) (Agrobacterium vitis (strain S4)).